The sequence spans 172 residues: RNA pyrophosphohydrolase (172 aa).

The region spanning G6–K149 is the Nudix hydrolase domain. The Nudix box signature appears at G38 to G59.

The protein belongs to the Nudix hydrolase family. RppH subfamily. A divalent metal cation serves as cofactor.

Functionally, accelerates the degradation of transcripts by removing pyrophosphate from the 5'-end of triphosphorylated RNA, leading to a more labile monophosphorylated state that can stimulate subsequent ribonuclease cleavage. This chain is RNA pyrophosphohydrolase, found in Shewanella denitrificans (strain OS217 / ATCC BAA-1090 / DSM 15013).